We begin with the raw amino-acid sequence, 426 residues long: Glutamyl-tRNA reductase (426 aa).

Substrate contacts are provided by residues Thr51 to Arg54, Ser110, Glu115 to Gln117, and Gln121. The active-site Nucleophile is Cys52. Gly190 to Ala195 contacts NADP(+).

It belongs to the glutamyl-tRNA reductase family. In terms of assembly, homodimer.

The catalysed reaction is (S)-4-amino-5-oxopentanoate + tRNA(Glu) + NADP(+) = L-glutamyl-tRNA(Glu) + NADPH + H(+). It functions in the pathway porphyrin-containing compound metabolism; protoporphyrin-IX biosynthesis; 5-aminolevulinate from L-glutamyl-tRNA(Glu): step 1/2. In terms of biological role, catalyzes the NADPH-dependent reduction of glutamyl-tRNA(Glu) to glutamate 1-semialdehyde (GSA). The chain is Glutamyl-tRNA reductase from Desulfotalea psychrophila (strain LSv54 / DSM 12343).